Consider the following 165-residue polypeptide: Methylated-DNA--protein-cysteine methyltransferase (165 aa).

Residue cysteine 126 is the Nucleophile; methyl group acceptor of the active site.

Belongs to the MGMT family.

It localises to the cytoplasm. It carries out the reaction a 6-O-methyl-2'-deoxyguanosine in DNA + L-cysteinyl-[protein] = S-methyl-L-cysteinyl-[protein] + a 2'-deoxyguanosine in DNA. The catalysed reaction is a 4-O-methyl-thymidine in DNA + L-cysteinyl-[protein] = a thymidine in DNA + S-methyl-L-cysteinyl-[protein]. In terms of biological role, involved in the cellular defense against the biological effects of O6-methylguanine (O6-MeG) and O4-methylthymine (O4-MeT) in DNA. Repairs the methylated nucleobase in DNA by stoichiometrically transferring the methyl group to a cysteine residue in the enzyme. This is a suicide reaction: the enzyme is irreversibly inactivated. The chain is Methylated-DNA--protein-cysteine methyltransferase from Mycolicibacterium paratuberculosis (strain ATCC BAA-968 / K-10) (Mycobacterium paratuberculosis).